The chain runs to 220 residues: Deoxyribose-phosphate aldolase (220 aa).

The active-site Proton donor/acceptor is the aspartate 89. Lysine 151 serves as the catalytic Schiff-base intermediate with acetaldehyde. Lysine 180 functions as the Proton donor/acceptor in the catalytic mechanism.

It belongs to the DeoC/FbaB aldolase family. DeoC type 1 subfamily.

The protein resides in the cytoplasm. It catalyses the reaction 2-deoxy-D-ribose 5-phosphate = D-glyceraldehyde 3-phosphate + acetaldehyde. Its pathway is carbohydrate degradation; 2-deoxy-D-ribose 1-phosphate degradation; D-glyceraldehyde 3-phosphate and acetaldehyde from 2-deoxy-alpha-D-ribose 1-phosphate: step 2/2. Functionally, catalyzes a reversible aldol reaction between acetaldehyde and D-glyceraldehyde 3-phosphate to generate 2-deoxy-D-ribose 5-phosphate. This is Deoxyribose-phosphate aldolase from Streptococcus sanguinis (strain SK36).